A 178-amino-acid polypeptide reads, in one-letter code: Hypoxanthine phosphoribosyltransferase (178 aa).

Diphosphate is bound by residues R43 and G44. Position 99 (E99) interacts with GMP. E99 lines the IMP pocket. 2 residues coordinate Mg(2+): E99 and D100. Catalysis depends on D103, which acts as the Proton acceptor. GMP contacts are provided by residues 103-108 (DSGNTL), K131, and D159. IMP-binding positions include 103 to 108 (DSGNTL) and K131. A diphosphate-binding site is contributed by R165.

This sequence belongs to the purine/pyrimidine phosphoribosyltransferase family. Homotetramer. Requires Mg(2+) as cofactor.

Its subcellular location is the cytoplasm. The catalysed reaction is IMP + diphosphate = hypoxanthine + 5-phospho-alpha-D-ribose 1-diphosphate. The enzyme catalyses GMP + diphosphate = guanine + 5-phospho-alpha-D-ribose 1-diphosphate. It functions in the pathway purine metabolism; IMP biosynthesis via salvage pathway; IMP from hypoxanthine: step 1/1. Purine salvage pathway enzyme which catalyzes the transfer of the ribosyl-5-phosphate group from 5-phospho-alpha-D-ribose 1-diphosphate (PRPP) to the N9 position of hypoxanthine to yield IMP (inosine 5'-monophosphate). To a lesser extent, can also act on guanine leading to GMP, but shows a highly less efficient activity with xanthine. This chain is Hypoxanthine phosphoribosyltransferase (hpt), found in Salmonella typhimurium (strain LT2 / SGSC1412 / ATCC 700720).